The following is a 213-amino-acid chain: Uracil phosphoribosyltransferase (213 aa).

5-phospho-alpha-D-ribose 1-diphosphate is bound by residues arginine 78, arginine 103, and 131–139; that span reads DPMLATGGT. Uracil contacts are provided by residues isoleucine 197 and 202–204; that span reads GDA. Aspartate 203 contributes to the 5-phospho-alpha-D-ribose 1-diphosphate binding site.

It belongs to the UPRTase family. Requires Mg(2+) as cofactor.

It carries out the reaction UMP + diphosphate = 5-phospho-alpha-D-ribose 1-diphosphate + uracil. It participates in pyrimidine metabolism; UMP biosynthesis via salvage pathway; UMP from uracil: step 1/1. With respect to regulation, allosterically activated by GTP. Its function is as follows. Catalyzes the conversion of uracil and 5-phospho-alpha-D-ribose 1-diphosphate (PRPP) to UMP and diphosphate. The chain is Uracil phosphoribosyltransferase from Bifidobacterium adolescentis (strain ATCC 15703 / DSM 20083 / NCTC 11814 / E194a).